The chain runs to 209 residues: NAD-reducing hydrogenase HoxS subunit delta (209 aa).

As to quaternary structure, tetramer of an alpha and a gamma subunits (flavin-containing dimer), and a delta and a nickel-containing beta subunits (hydrogenase dimer). The cofactor is [4Fe-4S] cluster. [3Fe-4S] cluster serves as cofactor. [2Fe-2S] cluster is required as a cofactor. Requires FMN as cofactor. It depends on Ni(2+) as a cofactor.

It is found in the cytoplasm. It carries out the reaction H2 + NAD(+) = NADH + H(+). This chain is NAD-reducing hydrogenase HoxS subunit delta (hoxY), found in Cupriavidus necator (strain ATCC 17699 / DSM 428 / KCTC 22496 / NCIMB 10442 / H16 / Stanier 337) (Ralstonia eutropha).